Reading from the N-terminus, the 443-residue chain is ATP-dependent protease ATPase subunit HslU (443 aa).

Residues Ile-18, 60–65 (GVGKTE), Asp-256, Glu-321, and Arg-393 contribute to the ATP site.

It belongs to the ClpX chaperone family. HslU subfamily. As to quaternary structure, a double ring-shaped homohexamer of HslV is capped on each side by a ring-shaped HslU homohexamer. The assembly of the HslU/HslV complex is dependent on binding of ATP.

Its subcellular location is the cytoplasm. Its function is as follows. ATPase subunit of a proteasome-like degradation complex; this subunit has chaperone activity. The binding of ATP and its subsequent hydrolysis by HslU are essential for unfolding of protein substrates subsequently hydrolyzed by HslV. HslU recognizes the N-terminal part of its protein substrates and unfolds these before they are guided to HslV for hydrolysis. The protein is ATP-dependent protease ATPase subunit HslU of Pectobacterium carotovorum subsp. carotovorum (strain PC1).